Reading from the N-terminus, the 298-residue chain is ATP synthase F(1) complex subunit gamma, mitochondrial (298 aa).

The transit peptide at Met1 to Met25 directs the protein to the mitochondrion. Position 39 is an N6-acetyllysine (Lys39). At Lys49 the chain carries N6-succinyllysine. Lys55 is subject to N6-acetyllysine. Lys115 is modified (N6-acetyllysine; alternate). N6-succinyllysine; alternate is present on Lys115. Lys138 bears the N6-acetyllysine mark. A Phosphoserine modification is found at Ser146. Lys154 is modified (N6-acetyllysine; alternate). An N6-succinyllysine; alternate modification is found at Lys154. Lys197 is subject to N6-acetyllysine. Position 270 is an N6-succinyllysine (Lys270).

This sequence belongs to the ATPase gamma chain family. In terms of assembly, component of the ATP synthase complex composed at least of ATP5F1A/subunit alpha, ATP5F1B/subunit beta, ATP5MC1/subunit c (homooctomer), MT-ATP6/subunit a, MT-ATP8/subunit 8, ATP5ME/subunit e, ATP5MF/subunit f, ATP5MG/subunit g, ATP5MK/subunit k, ATP5MJ/subunit j, ATP5F1C/subunit gamma, ATP5F1D/subunit delta, ATP5F1E/subunit epsilon, ATP5PF/subunit F6, ATP5PB/subunit b, ATP5PD/subunit d, ATP5PO/subunit OSCP. ATP synthase complex consists of a soluble F(1) head domain (subunits alpha(3) and beta(3)) - the catalytic core - and a membrane F(0) domain - the membrane proton channel (subunits c, a, 8, e, f, g, k and j). These two domains are linked by a central stalk (subunits gamma, delta, and epsilon) rotating inside the F1 region and a stationary peripheral stalk (subunits F6, b, d, and OSCP). Interacts with FLVCR2; this interaction occurs in the absence of heme and is disrupted upon heme binding.

The protein localises to the mitochondrion inner membrane. Functionally, subunit gamma, of the mitochondrial membrane ATP synthase complex (F(1)F(0) ATP synthase or Complex V) that produces ATP from ADP in the presence of a proton gradient across the membrane which is generated by electron transport complexes of the respiratory chain. ATP synthase complex consist of a soluble F(1) head domain - the catalytic core - and a membrane F(1) domain - the membrane proton channel. These two domains are linked by a central stalk rotating inside the F(1) region and a stationary peripheral stalk. During catalysis, ATP synthesis in the catalytic domain of F(1) is coupled via a rotary mechanism of the central stalk subunits to proton translocation. In vivo, can only synthesize ATP although its ATP hydrolase activity can be activated artificially in vitro. With the central stalk subunit delta, is essential for the biogenesis of F(1) catalytic part of the ATP synthase complex namely in the formation of F1 assembly intermediate. This is ATP synthase F(1) complex subunit gamma, mitochondrial from Mus musculus (Mouse).